Consider the following 901-residue polypeptide: Cyanophycin synthetase (901 aa).

Residues Lys224–Phe478 form the ATP-grasp domain. Residue Gly493–Thr499 coordinates ATP.

The protein in the C-terminal section; belongs to the MurCDEF family. In terms of assembly, homodimer.

The enzyme catalyses [L-4-(L-arginin-2-N-yl)aspartate](n) + L-aspartate + ATP = [L-4-(L-arginin-2-N-yl)aspartate](n)-L-aspartate + ADP + phosphate + H(+). The catalysed reaction is [L-4-(L-arginin-2-N-yl)aspartate](n)-L-aspartate + L-arginine + ATP = [L-4-(L-arginin-2-N-yl)aspartate](n+1) + ADP + phosphate + H(+). Catalyzes the ATP-dependent polymerization of arginine and aspartate to multi-L-arginyl-poly-L-aspartic acid (cyanophycin; a water-insoluble reserve polymer). The sequence is that of Cyanophycin synthetase (cphA) from Nostoc sp. (strain PCC 7120 / SAG 25.82 / UTEX 2576).